A 77-amino-acid polypeptide reads, in one-letter code: Large ribosomal subunit protein eL20 (77 aa).

It belongs to the eukaryotic ribosomal protein eL20 family. As to quaternary structure, part of the 50S ribosomal subunit. Binds 23S rRNA.

In Pyrococcus furiosus (strain ATCC 43587 / DSM 3638 / JCM 8422 / Vc1), this protein is Large ribosomal subunit protein eL20.